A 27-amino-acid chain; its full sequence is Snake venom serine protease Afaacytin alpha/beta/beta' chains (27 aa).

The Peptidase S1 domain occupies Val1 to Glu27.

Belongs to the peptidase S1 family. Snake venom subfamily. Heterodimer of an alpha and a beta chain. Subunit beta is constituted of two disulfide-linked polypeptidic chains, beta and beta'. Calcium appears to be required for structural cohesion of the molecule. Both chains alpha and beta are N-glycosylated. In terms of tissue distribution, expressed by the venom gland.

It is found in the secreted. Inhibited by diisopropylfluorophosphate (DFP), benzamidine, heparin and hirudin, but not by plasmatic thrombin inhibitors, antithrombin-III and ecotin. In terms of biological role, snake venom serine protease that exhibits alpha-fibrinase and beta-fibrinogenase activities. It replaces missing factors VIII (F8) and IX (F9) in deficient plasmas by activating purified human factor X (F10) into factor Xa. It releases serotonin from platelets and induces platelet aggregation in human (but not in rabbit). Has caseinolytic, arginine-esterase and amidase activities. The protein is Snake venom serine protease Afaacytin alpha/beta/beta' chains of Cerastes cerastes (Horned desert viper).